A 536-amino-acid chain; its full sequence is CTP synthase (536 aa).

The amidoligase domain stretch occupies residues 1–266; it reads MKTKFIFVTG…DEQVVEKLNI (266 aa). Residue serine 14 coordinates CTP. Serine 14 serves as a coordination point for UTP. ATP is bound by residues 15-20 and aspartate 72; that span reads SIGKGL. The Mg(2+) site is built by aspartate 72 and glutamate 140. Residues 147 to 149, 187 to 192, and lysine 223 contribute to the CTP site; these read DIE and KTKPTQ. Residues 187-192 and lysine 223 contribute to the UTP site; that span reads KTKPTQ. Residues 292–534 form the Glutamine amidotransferase type-1 domain; that stretch reads RIAIVGKYVN…IAAALDRKDK (243 aa). Glycine 354 provides a ligand contact to L-glutamine. Catalysis depends on cysteine 381, which acts as the Nucleophile; for glutamine hydrolysis. Residues 382 to 385, glutamate 405, and arginine 462 each bind L-glutamine; that span reads LGMQ. Active-site residues include histidine 507 and glutamate 509.

This sequence belongs to the CTP synthase family. As to quaternary structure, homotetramer.

It carries out the reaction UTP + L-glutamine + ATP + H2O = CTP + L-glutamate + ADP + phosphate + 2 H(+). The catalysed reaction is L-glutamine + H2O = L-glutamate + NH4(+). It catalyses the reaction UTP + NH4(+) + ATP = CTP + ADP + phosphate + 2 H(+). It participates in pyrimidine metabolism; CTP biosynthesis via de novo pathway; CTP from UDP: step 2/2. With respect to regulation, allosterically activated by GTP, when glutamine is the substrate; GTP has no effect on the reaction when ammonia is the substrate. The allosteric effector GTP functions by stabilizing the protein conformation that binds the tetrahedral intermediate(s) formed during glutamine hydrolysis. Inhibited by the product CTP, via allosteric rather than competitive inhibition. Its function is as follows. Catalyzes the ATP-dependent amination of UTP to CTP with either L-glutamine or ammonia as the source of nitrogen. Regulates intracellular CTP levels through interactions with the four ribonucleotide triphosphates. The protein is CTP synthase of Geobacter sulfurreducens (strain ATCC 51573 / DSM 12127 / PCA).